The sequence spans 338 residues: Delta(9)-fatty-acid desaturase fat-7 (338 aa).

4 consecutive transmembrane segments (helical) span residues 51–71 (VALF…LVFH), 76–96 (TAVF…AGAH), 194–214 (YFPL…VYFW), and 218–238 (AFIA…HATW).

It belongs to the fatty acid desaturase type 1 family. As to expression, expressed in the intestine in adult worms and in all four larval stages.

Its subcellular location is the membrane. It catalyses the reaction octadecanoyl-CoA + 2 Fe(II)-[cytochrome b5] + O2 + 2 H(+) = (9Z)-octadecenoyl-CoA + 2 Fe(III)-[cytochrome b5] + 2 H2O. The enzyme catalyses hexadecanoyl-CoA + 2 Fe(II)-[cytochrome b5] + O2 + 2 H(+) = (9Z)-hexadecenoyl-CoA + 2 Fe(III)-[cytochrome b5] + 2 H2O. The catalysed reaction is heptadecanoyl-CoA + 2 Fe(II)-[cytochrome b5] + O2 + 2 H(+) = (9Z)-heptadecenoyl-CoA + 2 Fe(III)-[cytochrome b5] + 2 H2O. It carries out the reaction (11E)-octadecenoyl-CoA + 2 Fe(II)-[cytochrome b5] + O2 + 2 H(+) = (9Z,11E)-octadecadienoyl-CoA + 2 Fe(III)-[cytochrome b5] + 2 H2O. It participates in lipid metabolism; monounsaturated fatty acid biosynthesis. Its pathway is lipid metabolism; fatty acid metabolism. Its function is as follows. Delta(9)-fatty acid desaturase that acts preferentially on stearoyl-CoA (octadecanoyl-CoA) producing the monounsaturated oleoyl-CoA ((9Z)-octadecenoyl-CoA), one of the most abundant monounsaturated fatty acid in Caenorhabditis elegans phospholipids and triacylglycerols. Also acts on palmitoyl-CoA (hexadecanoyl-CoA), heptadecanoyl-CoA and (11E)-octadecenoyl-CoA (trans-vaccenoyl-CoA), the monounsaturated fatty acids (MUFAs) produced are further used by several other desaturases and elongases as substrates to synthesize polyunsaturated fatty acids (PUFAs) endogenously (PUFAs are essential for membrane structure and many cellular and physiological processes). Unlike plants, Caenorhabditis elegans desaturases seem to use fatty acyl-CoAs as substrates. Partially inhibits expression of genes involved in beta-oxidation, such as ech-1 and acs-2, perhaps signaling via the actions of one of its fatty acid products. May form part of a negative feedback loop with the transcription factor nhr-49 to limit beta-oxidation, in which nhr-49 stimulates expression of fat-7 and acs-2, and in turn fat-7 indirectly inhibits acs-2 and other genes also involved in beta-oxidation. In Caenorhabditis elegans, this protein is Delta(9)-fatty-acid desaturase fat-7 (fat-7).